Here is a 589-residue protein sequence, read N- to C-terminus: MRSMKAIIEYLLKQALINLQQSGEMPIDLEVEIKVENAKDPSHGDYATNLALVLAKPCRQAPKVLAERLVAVIPADPSVEKIEIAGAGFINFFMRSTARSLIISEILNKGKEFGRGNLGQSQKVLIEFVSANPTGPLHVGHGRGAAFGATLGNVLKAAGYDVTLEYYVNDAGRQMNILAVSVWLRYLELAGEPIVFPTNGYKGQYVYEIAQEMWSEQGNQFVHPWISVVENLPADEPEGGDKETYIDAIIARAQSLLGKDGFANFHQHALKTVLDDIKDDLQAFGVRFDSWFSEQSLFEDGSIEKGIQALKDRGHTYEREGALWFRATDFGDEKDRVLVRANGQTTYFASDVAYHWNKYDRGFDRVIDIFGADHHGYVTRIKTAVKALGHDESALDVILVQFAILYRGGDRVQMSTRSGSFVTLRELREEVGNDAARYFYVARKPEQHMDFDLDLAKSESSDNPVYYIQYAHARICSVLRQLKERGLKWDKDMGLKNLDLLEQQHETTLISLIARYPEVIQSAAASCEPHQLAYYLRELANGLHSYYNAIQLLCEQEQLRCARLCLLESVRQVLNNGLAILGVSAPESM.

Residues 131-141 carry the 'HIGH' region motif; it reads ANPTGPLHVGH.

Belongs to the class-I aminoacyl-tRNA synthetase family. As to quaternary structure, monomer.

The protein localises to the cytoplasm. The enzyme catalyses tRNA(Arg) + L-arginine + ATP = L-arginyl-tRNA(Arg) + AMP + diphosphate. This chain is Arginine--tRNA ligase, found in Legionella pneumophila (strain Paris).